Reading from the N-terminus, the 190-residue chain is Protein GrpE (190 aa).

A compositionally biased stretch (polar residues) spans 1-18 (MTETPNTSSEEIQTSEPS). A disordered region spans residues 1–21 (MTETPNTSSEEIQTSEPSPDN).

The protein belongs to the GrpE family. Homodimer.

The protein localises to the cytoplasm. In terms of biological role, participates actively in the response to hyperosmotic and heat shock by preventing the aggregation of stress-denatured proteins, in association with DnaK and GrpE. It is the nucleotide exchange factor for DnaK and may function as a thermosensor. Unfolded proteins bind initially to DnaJ; upon interaction with the DnaJ-bound protein, DnaK hydrolyzes its bound ATP, resulting in the formation of a stable complex. GrpE releases ADP from DnaK; ATP binding to DnaK triggers the release of the substrate protein, thus completing the reaction cycle. Several rounds of ATP-dependent interactions between DnaJ, DnaK and GrpE are required for fully efficient folding. The protein is Protein GrpE of Chlamydia trachomatis serovar L2 (strain ATCC VR-902B / DSM 19102 / 434/Bu).